Here is a 252-residue protein sequence, read N- to C-terminus: Short chain dehydrogenase andC (252 aa).

Positions 1 to 25 are cleaved as a signal peptide; sequence MGFLQDKVVIITGAAAGIGLATATA. 3 residues coordinate NADP(+): Ile11, Asp57, and Arg119. The Proton donor role is filled by Ser137. Positions 151 and 155 each coordinate NADP(+). The active-site Proton acceptor is the Tyr151. The active-site Lowers pKa of active site Tyr is the Lys155.

This sequence belongs to the short-chain dehydrogenases/reductases (SDR) family.

It functions in the pathway secondary metabolite biosynthesis; terpenoid biosynthesis. Short chain dehydrogenase; part of the gene cluster that mediates the biosynthesis of anditomin, a fungal meroterpenoid. The first step of the pathway is the synthesis of 3,5-dimethylorsellinic acid (DMOA) by the polyketide synthase andM. DMOA is then converted to the phthalide compound 5,7-dihydroxy-4,6-dimethylphthalide (DHDMP) by the cytochrome P450 monooxygenase andK, which is further prenylated by the prenyltransferase andD to yield farnesyl-DHDMP. Further epoxidation by the FAD-dependent monooxygenase andE leads to epoxyfarnesyl-DHDMP. The next step involves the terpene cyclase andB that converts epoxyfarnesyl-DHDMP into preandiloid A through opening of the epoxide ring followed by the cyclization of the farnesyl moiety. Preandiloid A is in turn oxidized at the C-3 hydroxyl group to yield preandiloid B by the dehydrogenase andC. The dioxygenase andA is solely responsible for the dehydrogenation of preandiloid B leading to the enone preandiloid C, as well as for the intriguing structural rearrangement to generate the bicyclo[2.2.2]octane core, transforming preandiloid C into andiconin. FAD-binding monooxygenase andJ then produces andilesin D which is reduced by dehydrogenase andI to yield andilesin A. Action of acetyltransferase andG followed by a spontaneous acetate elimination leads then to andilesin B, which is in turn substrate of the short chain dehydrogenase andH to yield andilesin C. Finally, the dioxygenase andF catalyzes the transformation of andilesin C to anditomin. The polypeptide is Short chain dehydrogenase andC (Emericella variicolor (Aspergillus stellatus)).